The following is a 305-amino-acid chain: Protoheme IX farnesyltransferase (305 aa).

Helical transmembrane passes span 38–58 (FITT…SFLG), 60–80 (LDIV…SCAI), 110–130 (AYAF…MTTV), 131–151 (TSAV…TMWS), 161–181 (IGSV…TGTI), 185–205 (AWVL…SLAI), 227–247 (VTKR…FFLG), 249–269 (LGWP…VIGL), and 285–305 (FVYS…ITLF).

This sequence belongs to the UbiA prenyltransferase family. Protoheme IX farnesyltransferase subfamily. Interacts with CtaA.

The protein resides in the cell membrane. The enzyme catalyses heme b + (2E,6E)-farnesyl diphosphate + H2O = Fe(II)-heme o + diphosphate. It participates in porphyrin-containing compound metabolism; heme O biosynthesis; heme O from protoheme: step 1/1. Converts heme B (protoheme IX) to heme O by substitution of the vinyl group on carbon 2 of heme B porphyrin ring with a hydroxyethyl farnesyl side group. The sequence is that of Protoheme IX farnesyltransferase from Bacillus pumilus (strain SAFR-032).